Consider the following 118-residue polypeptide: NADH-quinone oxidoreductase subunit A (118 aa).

Helical transmembrane passes span 8–28 (ILIF…LNYL), 61–81 (FMYA…YPWA), and 86–106 (VLGL…VLGL).

The protein belongs to the complex I subunit 3 family. As to quaternary structure, NDH-1 is composed of 14 different subunits. Subunits NuoA, H, J, K, L, M, N constitute the membrane sector of the complex.

It localises to the cell membrane. The enzyme catalyses a quinone + NADH + 5 H(+)(in) = a quinol + NAD(+) + 4 H(+)(out). In terms of biological role, NDH-1 shuttles electrons from NADH, via FMN and iron-sulfur (Fe-S) centers, to quinones in the respiratory chain. The immediate electron acceptor for the enzyme in this species is believed to be a menaquinone. Couples the redox reaction to proton translocation (for every two electrons transferred, four hydrogen ions are translocated across the cytoplasmic membrane), and thus conserves the redox energy in a proton gradient. The polypeptide is NADH-quinone oxidoreductase subunit A (Carboxydothermus hydrogenoformans (strain ATCC BAA-161 / DSM 6008 / Z-2901)).